A 252-amino-acid chain; its full sequence is Phosphate import ATP-binding protein PstB 2 (252 aa).

Positions 6–247 (ISINDLSVYF…PQHKETEDYI (242 aa)) constitute an ABC transporter domain. 38–45 (GPSGSGKS) is a binding site for ATP.

Belongs to the ABC transporter superfamily. Phosphate importer (TC 3.A.1.7) family. As to quaternary structure, the complex is composed of two ATP-binding proteins (PstB), two transmembrane proteins (PstC and PstA) and a solute-binding protein (PstS).

Its subcellular location is the cell membrane. The catalysed reaction is phosphate(out) + ATP + H2O = ADP + 2 phosphate(in) + H(+). In terms of biological role, part of the ABC transporter complex PstSACB involved in phosphate import. Responsible for energy coupling to the transport system. The sequence is that of Phosphate import ATP-binding protein PstB 2 from Streptococcus thermophilus (strain CNRZ 1066).